We begin with the raw amino-acid sequence, 358 residues long: Trans-anol O-methyltransferase 1 (358 aa).

Residues G201, D224, D244, M245, and R259 each contribute to the S-adenosyl-L-methionine site. The active-site Proton acceptor is the H262.

It belongs to the class I-like SAM-binding methyltransferase superfamily. Cation-independent O-methyltransferase family. COMT subfamily. Highly expressed in developing fruits. Expressed at low levels in roots, young leaves, buds and flowers.

It catalyses the reaction (E)-anol + S-adenosyl-L-methionine = (E)-anethole + S-adenosyl-L-homocysteine + H(+). The enzyme catalyses (E)-isoeugenol + S-adenosyl-L-methionine = (E)-isomethyleugenol + S-adenosyl-L-homocysteine + H(+). The protein operates within aromatic compound metabolism; phenylpropanoid biosynthesis. With respect to regulation, inhibited by zinc and copper. Its function is as follows. Phenylpropene O-methyltransferase that catalyzes the conversion of trans-anol to trans-anethole and isoeugenol to isomethyleugenol. Phenylpropenes are the primary constituents of various essential plant oils. They are produced as antimicrobial and antianimal compounds, or as floral attractants of pollinators. This Pimpinella anisum (Anise) protein is Trans-anol O-methyltransferase 1 (AIMT1).